Consider the following 67-residue polypeptide: Large ribosomal subunit protein bL35 (67 aa).

Belongs to the bacterial ribosomal protein bL35 family.

The polypeptide is Large ribosomal subunit protein bL35 (Caldanaerobacter subterraneus subsp. tengcongensis (strain DSM 15242 / JCM 11007 / NBRC 100824 / MB4) (Thermoanaerobacter tengcongensis)).